A 386-amino-acid polypeptide reads, in one-letter code: Succinate--CoA ligase [ADP-forming] subunit beta (386 aa).

The ATP-grasp domain occupies 9–244 (KELLREFGVA…TTEEDPREVE (236 aa)). ATP is bound by residues lysine 46, 53–55 (GRG), glutamate 99, serine 102, and glutamate 107. Mg(2+) contacts are provided by asparagine 199 and aspartate 213. Residues asparagine 264 and 321–323 (GIM) each bind substrate.

The protein belongs to the succinate/malate CoA ligase beta subunit family. Heterotetramer of two alpha and two beta subunits. Mg(2+) serves as cofactor.

The enzyme catalyses succinate + ATP + CoA = succinyl-CoA + ADP + phosphate. It carries out the reaction GTP + succinate + CoA = succinyl-CoA + GDP + phosphate. It functions in the pathway carbohydrate metabolism; tricarboxylic acid cycle; succinate from succinyl-CoA (ligase route): step 1/1. Functionally, succinyl-CoA synthetase functions in the citric acid cycle (TCA), coupling the hydrolysis of succinyl-CoA to the synthesis of either ATP or GTP and thus represents the only step of substrate-level phosphorylation in the TCA. The beta subunit provides nucleotide specificity of the enzyme and binds the substrate succinate, while the binding sites for coenzyme A and phosphate are found in the alpha subunit. This Exiguobacterium sp. (strain ATCC BAA-1283 / AT1b) protein is Succinate--CoA ligase [ADP-forming] subunit beta.